We begin with the raw amino-acid sequence, 293 residues long: Bifunctional protein FolD (293 aa).

NADP(+) contacts are provided by residues G164 to S166, S193, and T234.

The protein belongs to the tetrahydrofolate dehydrogenase/cyclohydrolase family. Homodimer.

It catalyses the reaction (6R)-5,10-methylene-5,6,7,8-tetrahydrofolate + NADP(+) = (6R)-5,10-methenyltetrahydrofolate + NADPH. The enzyme catalyses (6R)-5,10-methenyltetrahydrofolate + H2O = (6R)-10-formyltetrahydrofolate + H(+). It participates in one-carbon metabolism; tetrahydrofolate interconversion. Catalyzes the oxidation of 5,10-methylenetetrahydrofolate to 5,10-methenyltetrahydrofolate and then the hydrolysis of 5,10-methenyltetrahydrofolate to 10-formyltetrahydrofolate. The sequence is that of Bifunctional protein FolD from Bacteroides fragilis (strain ATCC 25285 / DSM 2151 / CCUG 4856 / JCM 11019 / LMG 10263 / NCTC 9343 / Onslow / VPI 2553 / EN-2).